A 267-amino-acid polypeptide reads, in one-letter code: 3-methyl-2-oxobutanoate hydroxymethyltransferase (267 aa).

Asp46 and Asp85 together coordinate Mg(2+). 3-methyl-2-oxobutanoate contacts are provided by residues 46–47 (DS), Asp85, and Lys115. Glu117 serves as a coordination point for Mg(2+). Residue Glu184 is the Proton acceptor of the active site.

Belongs to the PanB family. In terms of assembly, homodecamer; pentamer of dimers. Mg(2+) is required as a cofactor.

It is found in the cytoplasm. The enzyme catalyses 3-methyl-2-oxobutanoate + (6R)-5,10-methylene-5,6,7,8-tetrahydrofolate + H2O = 2-dehydropantoate + (6S)-5,6,7,8-tetrahydrofolate. It participates in cofactor biosynthesis; (R)-pantothenate biosynthesis; (R)-pantoate from 3-methyl-2-oxobutanoate: step 1/2. In terms of biological role, catalyzes the reversible reaction in which hydroxymethyl group from 5,10-methylenetetrahydrofolate is transferred onto alpha-ketoisovalerate to form ketopantoate. This chain is 3-methyl-2-oxobutanoate hydroxymethyltransferase, found in Geobacter sulfurreducens (strain ATCC 51573 / DSM 12127 / PCA).